We begin with the raw amino-acid sequence, 332 residues long: Endo-1,4-beta-xylanase (332 aa).

Positions 1-21 (MLSSTTLLAILSALALTSVQA) are cleaved as a signal peptide. Residues 26–316 (KNSLDYLANK…KSTYYVVQQA (291 aa)) enclose the GH10 domain. Glutamate 120 acts as the Proton donor in catalysis. A disulfide bridge connects residues cysteine 128 and cysteine 160. Catalysis depends on glutamate 214, which acts as the Nucleophile. Cysteine 247 and cysteine 253 are disulfide-bonded.

The protein belongs to the glycosyl hydrolase 10 (cellulase F) family.

The protein resides in the secreted. It catalyses the reaction Endohydrolysis of (1-&gt;4)-beta-D-xylosidic linkages in xylans.. Functionally, requires at least three xylose residues for catalytic activity. Does not have activity against xylobiose. In Naganishia albida (Cryptococcus albidus), this protein is Endo-1,4-beta-xylanase.